The sequence spans 364 residues: Adenosine 3'-phospho 5'-phosphosulfate transporter 2 (364 aa).

Helical transmembrane passes span 39-59 (WLQFVLLSLAIFILYIGYGYM), 74-94 (WTLTLIQFLIYSGCGYTECII), 106-126 (IYGVIAFFTVATMGLSNASVG), 131-151 (PTQVIFKCCKLIPVLIGGILI), 157-177 (GWIDIGAAMLMSLGIIMFTLA), 187-206 (SRGYIMICGALLADAVIGNI), 231-251 (VFIFAFVVLSGEVFSAIPFFL), 257-277 (TFGYALILSCLGYLGVNVVLT), 281-301 (VFGALVAVTVTTLRKALTIIL), and 310-330 (FTIEYVYAGSVVMLAIYLNLY).

The protein belongs to the nucleotide-sugar transporter family. SLC35B subfamily.

It localises to the golgi apparatus membrane. Its function is as follows. Mediates the transport of adenosine 3'-phospho 5'-phosphosulfate (PAPS), from cytosol into Golgi. PAPS is a universal sulfuryl donor for sulfation events that take place in the Golgi. The polypeptide is Adenosine 3'-phospho 5'-phosphosulfate transporter 2 (pst-2) (Caenorhabditis elegans).